Consider the following 1237-residue polypeptide: Zinc finger protein 687 (1237 aa).

2 disordered regions span residues 1-80 (MGDM…PDIS) and 96-330 (EALA…PLKV). Residues 97–111 (ALAGGSAGDGAQAAG) are compositionally biased toward low complexity. Phosphoserine occurs at positions 102, 129, and 140. Positions 132-144 (PSLPGTPHSPAPP) are enriched in pro residues. A Phosphothreonine modification is found at T148. Residues S227, S242, S251, S253, S266, and S271 each carry the phosphoserine modification. The span at 234–244 (LAQQGSGSSPK) shows a compositional bias: polar residues. K285 is covalently cross-linked (Glycyl lysine isopeptide (Lys-Gly) (interchain with G-Cter in SUMO2)). Over residues 297-310 (SSPGSPQSPSSGAE) the composition is skewed to low complexity. Residues K336 and K372 each participate in a glycyl lysine isopeptide (Lys-Gly) (interchain with G-Cter in SUMO2) cross-link. S374 is modified (phosphoserine). Phosphothreonine is present on T377. Glycyl lysine isopeptide (Lys-Gly) (interchain with G-Cter in SUMO2) cross-links involve residues K384, K397, and K422. Position 433 is a phosphoserine (S433). Glycyl lysine isopeptide (Lys-Gly) (interchain with G-Cter in SUMO2) cross-links involve residues K435, K439, K451, and K464. S495 is modified (phosphoserine). The C2H2-type 1; degenerate zinc finger occupies 533 to 552 (YRCLECGDAFSLEKSLARHY). 5 consecutive C2H2-type zinc fingers follow at residues 705-727 (NVCP…QRMH), 764-787 (YRCP…QTSH), 792-815 (HKCP…YSQH), 827-849 (YKCA…FDQH), and 858-881 (FKCP…KNTH). Over residues 880–890 (THQSGRLEETA) the composition is skewed to basic and acidic residues. The segment at 880-957 (THQSGRLEET…LGSKGLKGGG (78 aa)) is disordered. At T900 the chain carries Phosphothreonine. Over residues 915–925 (AAPATEESSSS) the composition is skewed to low complexity. K954 participates in a covalent cross-link: Glycyl lysine isopeptide (Lys-Gly) (interchain with G-Cter in SUMO2). 2 C2H2-type zinc fingers span residues 963 to 986 (WTCG…KKEH) and 993 to 1016 (FPCR…RVNH). A Glycyl lysine isopeptide (Lys-Gly) (interchain with G-Cter in SUMO2) cross-link involves residue K1043. The disordered stretch occupies residues 1051–1121 (LQLGAQSPGR…LRYRSSSSTE (71 aa)). Position 1057 is a phosphoserine (S1057). Omega-N-methylarginine is present on R1060. Phosphoserine is present on residues S1082, S1083, and S1085. At R1101 the chain carries Omega-N-methylarginine. S1106 and S1118 each carry phosphoserine. A C2H2-type 9 zinc finger spans residues 1135–1158 (QQCLDCGLCFASPGSLSRHRFISH). The segment at 1159 to 1195 (KKRRGVGKASALGLGDGEEEAPPSRSDPDGGDSPLPA) is disordered. A phosphoserine mark is found at S1184, S1191, and S1211. Residues 1200–1222 (LTCKVCGKSCDSPLNLKTHFRTH) form a C2H2-type 10 zinc finger.

This sequence belongs to the krueppel C2H2-type zinc-finger protein family. As to quaternary structure, interacts with ZMYND8. As to expression, widely expressed with highest levels in obvary, muscle, blood and lung.

It localises to the cytoplasm. Its subcellular location is the nucleus. May be involved in transcriptional regulation. The sequence is that of Zinc finger protein 687 (ZNF687) from Homo sapiens (Human).